Consider the following 348-residue polypeptide: S-adenosylmethionine-dependent nucleotide dehydratase RSAD2 (348 aa).

Positions 56–276 constitute a Radical SAM core domain; sequence SATPSSVNYH…LERHSSISCL (221 aa). Residues Cys-70, Cys-74, and Cys-77 each coordinate [4Fe-4S] cluster.

It belongs to the radical SAM superfamily. RSAD2 family. It depends on [4Fe-4S] cluster as a cofactor. In terms of tissue distribution, expressed at low levels in spleen and head kidney.

It is found in the endoplasmic reticulum membrane. Functionally, interferon-inducible iron-sulfur (4FE-4S) cluster-binding antiviral protein which plays a major role in the cell antiviral state induced by type I and type II interferon. This is S-adenosylmethionine-dependent nucleotide dehydratase RSAD2 from Oncorhynchus mykiss (Rainbow trout).